The chain runs to 151 residues: 3-dehydroquinate dehydratase 1 (151 aa).

Residue Y23 is the Proton acceptor of the active site. N75, H81, and D88 together coordinate substrate. H101 (proton donor) is an active-site residue. Residues 102 to 103 (LS) and R112 each bind substrate.

The protein belongs to the type-II 3-dehydroquinase family. In terms of assembly, homododecamer.

The enzyme catalyses 3-dehydroquinate = 3-dehydroshikimate + H2O. It functions in the pathway metabolic intermediate biosynthesis; chorismate biosynthesis; chorismate from D-erythrose 4-phosphate and phosphoenolpyruvate: step 3/7. Its function is as follows. Catalyzes a trans-dehydration via an enolate intermediate. This is 3-dehydroquinate dehydratase 1 (aroQ1) from Pseudomonas putida (strain ATCC 47054 / DSM 6125 / CFBP 8728 / NCIMB 11950 / KT2440).